Here is a 197-residue protein sequence, read N- to C-terminus: Cytochrome c-L (197 aa).

A signal peptide spans 1–25; that stretch reads MMNRVKIGTALLGLTLAGIALPALA. Heme c-binding residues include Cys90, Cys93, and His94.

In terms of processing, binds 1 heme c group covalently per subunit.

It localises to the periplasm. Functionally, electron acceptor for MDH. Acts in methanol oxidation. This Methylorubrum extorquens (strain ATCC 14718 / DSM 1338 / JCM 2805 / NCIMB 9133 / AM1) (Methylobacterium extorquens) protein is Cytochrome c-L (moxG).